Consider the following 213-residue polypeptide: 3,4-dihydroxy-2-butanone 4-phosphate synthase (213 aa).

Residues 37 to 38 (RE), Asp42, 150 to 154 (RPGHT), and Glu174 each bind D-ribulose 5-phosphate. Glu38 lines the Mg(2+) pocket. His153 is a Mg(2+) binding site.

The protein belongs to the DHBP synthase family. Homodimer. The cofactor is Mg(2+). Mn(2+) is required as a cofactor.

It carries out the reaction D-ribulose 5-phosphate = (2S)-2-hydroxy-3-oxobutyl phosphate + formate + H(+). It participates in cofactor biosynthesis; riboflavin biosynthesis; 2-hydroxy-3-oxobutyl phosphate from D-ribulose 5-phosphate: step 1/1. Its function is as follows. Catalyzes the conversion of D-ribulose 5-phosphate to formate and 3,4-dihydroxy-2-butanone 4-phosphate. In Clostridium botulinum (strain ATCC 19397 / Type A), this protein is 3,4-dihydroxy-2-butanone 4-phosphate synthase.